The following is a 453-amino-acid chain: Omega-3 fatty acid desaturase, chloroplastic (453 aa).

The Histidine box-1 motif lies at 171–175; the sequence is HDCGH. The Histidine box-2 motif lies at 207–211; sequence HRTHH. Positions 374–378 match the Histidine box-3 motif; that stretch reads HVIHH.

It belongs to the fatty acid desaturase type 1 family.

The protein localises to the plastid. The protein resides in the chloroplast membrane. It participates in lipid metabolism; polyunsaturated fatty acid biosynthesis. Its function is as follows. Chloroplast omega-3 fatty acid desaturase introduces the third double bond in the biosynthesis of 16:3 and 18:3 fatty acids, important constituents of plant membranes. It is thought to use ferredoxin as an electron donor and to act on fatty acids esterified to galactolipids, sulfolipids and phosphatidylglycerol. The protein is Omega-3 fatty acid desaturase, chloroplastic (FAD7) of Glycine max (Soybean).